Reading from the N-terminus, the 130-residue chain is Small ribosomal subunit protein uS9 (130 aa).

This sequence belongs to the universal ribosomal protein uS9 family.

This chain is Small ribosomal subunit protein uS9, found in Citrobacter koseri (strain ATCC BAA-895 / CDC 4225-83 / SGSC4696).